The chain runs to 271 residues: MKRPNNRPTNTMSLILCLTLSSLCVSSQSASVHGKNFATNRAVKSSSPFVVLSPDDNVVSMSGENGYRSALREAFDKSSRDYDDNGEDVFSNEKRRLRFHKRRLRFDRRDQDEGNFRRFPTNAVSMSADENSPFDLSNEDGAVYQRDLRAPRLRFYSLRKRAAGGMEQSEGQNPETESHSRRKRSVLTPSLSSLGESLESGISKRISINQDLKAITDMLLTEQIRERQRYLADLRQRLLEKGKRSSGVSLLTSNKDEEQRELLKAISNLLD.

The signal sequence occupies residues 1–28; the sequence is MKRPNNRPTNTMSLILCLTLSSLCVSSQ. 2 propeptides span residues 29–95 and 162–184; these read SASV…NEKR and AAGGMEQSEGQNPETESHSRRKR. Positions 162–190 are disordered; it reads AAGGMEQSEGQNPETESHSRRKRSVLTPS. The residue at position 241 (lysine 241) is a Lysine amide.

The protein belongs to the molluscan ELH family. In terms of tissue distribution, bag cell neurons.

The protein localises to the secreted. In terms of biological role, ELH acts as a neurotransmitter locally, upon neurons of the abdominal ganglion and as a hormone by diffusing into the circulating hemolymph and modulating the activity of other organs. It specifically causes contraction of smooth muscle in the ovotestis and expulsion of the egg string. Its function is as follows. Alpha-BCP decreases the activity of a cluster of neurons in the left upper quadrant of the abdominal ganglion. Beta-BCP specifically excites 2 neurons, L1 and R1, in the abdominal ganglion. This is ELH from Aplysia californica (California sea hare).